Here is a 558-residue protein sequence, read N- to C-terminus: MAKLLSCVLGPRLYKIYRERDSERAPSSVPGTPTSVTNPHSSSWDTYYQPRALEKHADSILALASVFWSISYYSSPFAFFYLYRKGYLSLSKVVPFSHYAGTLLLLLAGVACLRGIGRWTNPQYRQFITILEATHRNHSAENKRQLANYNFDFRSWPVDFHWEEPSSRKESRGGPSRRGVALLRPEPLHRGTADTFLNRVKKLPCQITSYLVAHTLGRRMLYPGSVYLLQKALMPVLLQGQARLVEECHGRRAKLLACDGNEIDTMFVDRRGTAEPQGQKLVICCEGNAGFYEVGCVSTPLEAGYSVLGWNHPGFAGSTGVPFPQNEANAMDVVVQFAIHRLGFQPEDIILYAWSIGGFTATWAAMSYPDISAVILDASFDDLVPLALKVMPDSWRGLVTRTVRQHLNLNNAEQLCRYQGPVLLIRRTRDEIITTTVPEDIMSNRGNDLLLKFLQHRYPRVMAEEGLRVVRQWLEASSQLEEASIYSRWEVEEDWCLSVLRSYQAEHGPEFPWSVGEDMSADGRRQLALFLAQKHLNNFEATHCTPLPAQNFQMPWHL.

The next 2 helical transmembrane spans lie at 60-80 (ILAL…FAFF) and 93-113 (VVPF…VACL). The Cytoplasmic portion of the chain corresponds to 114 to 558 (RGIGRWTNPQ…AQNFQMPWHL (445 aa)). An AB hydrolase-1 domain is found at 281 to 407 (LVICCEGNAG…LVTRTVRQHL (127 aa)). Residues serine 355, aspartate 430, and histidine 507 each act as charge relay system in the active site.

This sequence belongs to the AB hydrolase superfamily. ABHD16 family.

It localises to the membrane. It catalyses the reaction 1-heptadecanoyl-2-(5Z,8Z,11Z,14Z-eicosatetraenoyl)-sn-glycero-3-phosphoserine + H2O = 1-heptadecanoyl-sn-glycero-3-phosphoserine + (5Z,8Z,11Z,14Z)-eicosatetraenoate + H(+). The catalysed reaction is 1-hexadecanoyl-2-(9Z-octadecenoyl)-sn-glycero-3-phospho-L-serine + H2O = 1-hexadecanoyl-sn-glycero-3-phospho-L-serine + (9Z)-octadecenoate + H(+). The enzyme catalyses 1-octadecanoyl-2-(9Z,12Z-octadecadienoyl)-sn-glycero-3-phosphoserine + H2O = 1-octadecanoyl-sn-glycero-3-phosphoserine + (9Z,12Z)-octadecadienoate + H(+). It carries out the reaction 1-heptadecanoyl-2-(5Z,8Z,11Z,14Z-eicosatetraenoyl)-sn-glycero-3-phosphocholine + H2O = 1-heptadecanoyl-sn-glycero-3-phosphocholine + (5Z,8Z,11Z,14Z)-eicosatetraenoate + H(+). It catalyses the reaction 1-hexadecanoyl-2-(9Z-octadecenoyl)-sn-glycero-3-phosphoglycerol + H2O = 1-hexadecanoyl-sn-glycero-3-phosphoglycerol + (9Z)-octadecenoate + H(+). The catalysed reaction is 1-hexadecanoyl-2-(9Z-octadecenoyl)-sn-glycero-3-phospho-(1D-myo-inositol) + H2O = 1-hexadecanoyl-sn-glycero-3-phospho-(1D-myo-inositol) + (9Z)-octadecenoate + H(+). The enzyme catalyses 1-heptadecanoyl-2-(5Z,8Z,11Z,14Z-eicosatetraenoyl)-sn-glycero-3-phosphoethanolamine + H2O = 1-heptadecanoyl-sn-glycero-3-phosphoethanolamine + (5Z,8Z,11Z,14Z)-eicosatetraenoate + H(+). It carries out the reaction 1-hexadecanoyl-2-(9Z-octadecenoyl)-sn-glycero-3-phospho-(1'-sn-glycerol) + H2O = 1-hexadecanoyl-sn-glycero-3-phospho-(1'-sn-glycerol) + (9Z)-octadecenoate + H(+). It catalyses the reaction Hydrolyzes glycerol monoesters of long-chain fatty acids.. The catalysed reaction is 1-tetradecanoylglycerol + H2O = tetradecanoate + glycerol + H(+). The enzyme catalyses 2-hexadecanoylglycerol + H2O = glycerol + hexadecanoate + H(+). It carries out the reaction 1-(9Z-octadecenoyl)-glycerol + H2O = glycerol + (9Z)-octadecenoate + H(+). It catalyses the reaction 2-(9Z-octadecenoyl)-glycerol + H2O = glycerol + (9Z)-octadecenoate + H(+). The catalysed reaction is 2-(9Z,12Z-octadecadienoyl)-glycerol + H2O = (9Z,12Z)-octadecadienoate + glycerol + H(+). The enzyme catalyses 1-(5Z,8Z,11Z,14Z-eicosatetraenoyl)-glycerol + H2O = glycerol + (5Z,8Z,11Z,14Z)-eicosatetraenoate + H(+). It carries out the reaction 2-(5Z,8Z,11Z,14Z-eicosatetraenoyl)-glycerol + H2O = glycerol + (5Z,8Z,11Z,14Z)-eicosatetraenoate + H(+). It catalyses the reaction prostaglandin D2-1-glycerol ester + H2O = prostaglandin D2 + glycerol + H(+). The catalysed reaction is 2-glyceryl-15-deoxy-Delta(12,14)-prostaglandin J2 + H2O = 15-deoxy-Delta(12,14)-prostaglandin J2 + glycerol + H(+). The enzyme catalyses 1-(9Z,12Z-octadecadienoyl)-glycerol + H2O = (9Z,12Z)-octadecadienoate + glycerol + H(+). Its function is as follows. Phosphatidylserine (PS) lipase that mediates the hydrolysis of phosphatidylserine to generate lysophosphatidylserine (LPS). LPS constitutes a class of signaling lipids that regulates immunological and neurological processes. Has no activity towards diacylglycerol, triacylglycerol or lysophosphatidylserine lipase. Also has monoacylglycerol lipase activity, with preference for 1-(9Z,12Z-octadecadienoyl)-glycerol (1-LG) and 2-glyceryl-15-deoxy-Delta(12,14)-prostaglandin J2 (15d-PGJ(2)-G). This Bos taurus (Bovine) protein is Phosphatidylserine lipase ABHD16A.